Consider the following 72-residue polypeptide: Conotoxin VnMKLT2-011 (72 aa).

The first 23 residues, 1-23 (MMKLTCVLIIAVLFLTACQLTTA), serve as a signal peptide directing secretion. Positions 24–42 (ETRDEYRAVRSSDEVRNSR) are excised as a propeptide. 3 cysteine pairs are disulfide-bonded: cysteine 44–cysteine 57, cysteine 51–cysteine 62, and cysteine 56–cysteine 71.

This sequence belongs to the conotoxin O1 superfamily. As to expression, expressed by the venom duct.

The protein localises to the secreted. The sequence is that of Conotoxin VnMKLT2-011 from Conus ventricosus (Mediterranean cone).